Consider the following 352-residue polypeptide: Nicotinate-nucleotide--dimethylbenzimidazole phosphoribosyltransferase (352 aa).

The active-site Proton acceptor is the Glu-318.

The protein belongs to the CobT family.

The catalysed reaction is 5,6-dimethylbenzimidazole + nicotinate beta-D-ribonucleotide = alpha-ribazole 5'-phosphate + nicotinate + H(+). Its pathway is nucleoside biosynthesis; alpha-ribazole biosynthesis; alpha-ribazole from 5,6-dimethylbenzimidazole: step 1/2. Its function is as follows. Catalyzes the synthesis of alpha-ribazole-5'-phosphate from nicotinate mononucleotide (NAMN) and 5,6-dimethylbenzimidazole (DMB). The protein is Nicotinate-nucleotide--dimethylbenzimidazole phosphoribosyltransferase of Dehalococcoides mccartyi (strain CBDB1).